Reading from the N-terminus, the 303-residue chain is Coenzyme PQQ synthesis protein B (303 aa).

This sequence belongs to the PqqB family.

It functions in the pathway cofactor biosynthesis; pyrroloquinoline quinone biosynthesis. In terms of biological role, may be involved in the transport of PQQ or its precursor to the periplasm. The polypeptide is Coenzyme PQQ synthesis protein B (Pseudomonas putida (strain GB-1)).